A 325-amino-acid polypeptide reads, in one-letter code: MDEFDLIHSITPRTIHHSSVDVGIGDDAALYTAKHGVQEIVCVDTMVEDVHFKLHYSSPEDIGYKALAVNISDIAAMGGIPKFYLVSLAVPSKWTESEIKAMYEGMNELAKLYHMDLIGGDTVSTADKLVVTVTVIGEIEKGQACLRSLAKPNDIVFVTGEIGSSAAGLSLLLEETNPQNSSVETDYFIHRHKRPEPRVSVGRLCSIFKRAALNDVSDGLASELNEIAEASCVSIEIVESMLPIHSDLPKLHPNWKEWALFGGEDFELTGTVSNEEWEVLKQECAALHLPITKIGYVREKTKSKVILKTDQTSMILEKKGYNHFK.

D27 and D44 together coordinate Mg(2+). Position 51 (H51) interacts with substrate. D73 serves as a coordination point for Mg(2+). Residues Y103, 120–121, and R147 each bind ATP; that span reads GD. D121 lines the Mg(2+) pocket. A Mg(2+)-binding site is contributed by D215. S217 provides a ligand contact to ATP. D218 provides a ligand contact to Mg(2+). E264 and Y321 together coordinate substrate.

The protein belongs to the thiamine-monophosphate kinase family.

It carries out the reaction thiamine phosphate + ATP = thiamine diphosphate + ADP. The protein operates within cofactor biosynthesis; thiamine diphosphate biosynthesis; thiamine diphosphate from thiamine phosphate: step 1/1. Functionally, catalyzes the ATP-dependent phosphorylation of thiamine-monophosphate (TMP) to form thiamine-pyrophosphate (TPP), the active form of vitamin B1. The protein is Thiamine-monophosphate kinase of Bacillus subtilis (strain 168).